A 494-amino-acid chain; its full sequence is Glycerol kinase (494 aa).

ADP is bound at residue T13. ATP contacts are provided by T13, T14, and S15. T13 provides a ligand contact to sn-glycerol 3-phosphate. Residue R17 coordinates ADP. Sn-glycerol 3-phosphate contacts are provided by R83, E84, Y135, and D244. The glycerol site is built by R83, E84, Y135, D244, and Q245. ADP is bound by residues T266 and G309. T266, G309, Q313, and G410 together coordinate ATP. ADP contacts are provided by G410 and N414.

This sequence belongs to the FGGY kinase family.

It carries out the reaction glycerol + ATP = sn-glycerol 3-phosphate + ADP + H(+). Its pathway is polyol metabolism; glycerol degradation via glycerol kinase pathway; sn-glycerol 3-phosphate from glycerol: step 1/1. With respect to regulation, inhibited by fructose 1,6-bisphosphate (FBP). Key enzyme in the regulation of glycerol uptake and metabolism. Catalyzes the phosphorylation of glycerol to yield sn-glycerol 3-phosphate. This Shewanella putrefaciens (strain CN-32 / ATCC BAA-453) protein is Glycerol kinase.